We begin with the raw amino-acid sequence, 107 residues long: Theromyzin (107 aa).

The first 21 residues, 1-21 (MHAKIILALFLGMTAFLAVQA), serve as a signal peptide directing secretion.

As to expression, coelomic liquid (at protein level). Expressed in large fat cells in contact with coelomic cavities, in intestinal epithelia and at the epidermis level.

Its subcellular location is the secreted. In terms of biological role, has bacteriostatic activity against M.luteus. No activity toward E.coli and F.oxysporum. In Theromyzon tessulatum (Duck leech), this protein is Theromyzin.